We begin with the raw amino-acid sequence, 347 residues long: 3-keto-steroid reductase ERG27 (347 aa).

Residues Leu-15, Thr-38, and Arg-44 each coordinate NADP(+). Catalysis depends on proton donor residues Ser-179 and Tyr-202. NADP(+) contacts are provided by Tyr-202, Lys-206, and Ser-237. Catalysis depends on Lys-206, which acts as the Lowers pKa of active site Tyr. Thr-345 bears the Phosphothreonine mark.

The protein belongs to the short-chain dehydrogenases/reductases (SDR) family. ERG27 subfamily. As to quaternary structure, heterotetramer of ERG25, ERG26, ERG27 and ERG28. ERG28 acts as a scaffold to tether ERG27 and other 4,4-demethylation-related enzymes, forming a demethylation enzyme complex, in the endoplasmic reticulum. Interacts with ERG25 and ERG28. Also interacts with ERG7, but only in lipid particles.

It localises to the endoplasmic reticulum membrane. The protein localises to the lipid droplet. The enzyme catalyses 3-dehydro-4alpha-methylzymosterol + NADPH + H(+) = 4alpha-methylzymosterol + NADP(+). Its pathway is steroid biosynthesis; zymosterol biosynthesis; zymosterol from lanosterol: step 5/6. Functionally, 3-keto-steroid reductase; part of the third module of ergosterol biosynthesis pathway that includes the late steps of the pathway. ERG27 is a catalytic component of the C-4 demethylation complex that catalyze the reduction of the keto group on the C-3. The third module or late pathway involves the ergosterol synthesis itself through consecutive reactions that mainly occur in the endoplasmic reticulum (ER) membrane. Firstly, the squalene synthase ERG9 catalyzes the condensation of 2 farnesyl pyrophosphate moieties to form squalene, which is the precursor of all steroids. Squalene synthase is crucial for balancing the incorporation of farnesyl diphosphate (FPP) into sterol and nonsterol isoprene synthesis. Secondly, the squalene epoxidase ERG1 catalyzes the stereospecific oxidation of squalene to (S)-2,3-epoxysqualene, which is considered to be a rate-limiting enzyme in steroid biosynthesis. Then, the lanosterol synthase ERG7 catalyzes the cyclization of (S)-2,3 oxidosqualene to lanosterol, a reaction that forms the sterol core. In the next steps, lanosterol is transformed to zymosterol through a complex process involving various demethylation, reduction and desaturation reactions. The lanosterol 14-alpha-demethylase ERG11 (also known as CYP51) catalyzes C14-demethylation of lanosterol to produce 4,4'-dimethyl cholesta-8,14,24-triene-3-beta-ol, which is critical for ergosterol biosynthesis. The C-14 reductase ERG24 reduces the C14=C15 double bond of 4,4-dimethyl-cholesta-8,14,24-trienol to produce 4,4-dimethyl-cholesta-8,24-dienol. 4,4-dimethyl-cholesta-8,24-dienol is substrate of the C-4 demethylation complex ERG25-ERG26-ERG27 in which ERG25 catalyzes the three-step monooxygenation required for the demethylation of 4,4-dimethyl and 4alpha-methylsterols, ERG26 catalyzes the oxidative decarboxylation that results in a reduction of the 3-beta-hydroxy group at the C-3 carbon to an oxo group, and ERG27 is responsible for the reduction of the keto group on the C-3. ERG28 has a role as a scaffold to help anchor ERG25, ERG26 and ERG27 to the endoplasmic reticulum and ERG29 regulates the activity of the iron-containing C4-methylsterol oxidase ERG25. Then, the sterol 24-C-methyltransferase ERG6 catalyzes the methyl transfer from S-adenosyl-methionine to the C-24 of zymosterol to form fecosterol. The C-8 sterol isomerase ERG2 catalyzes the reaction which results in unsaturation at C-7 in the B ring of sterols and thus converts fecosterol to episterol. The sterol-C5-desaturase ERG3 then catalyzes the introduction of a C-5 double bond in the B ring to produce 5-dehydroepisterol. The C-22 sterol desaturase ERG5 further converts 5-dehydroepisterol into ergosta-5,7,22,24(28)-tetraen-3beta-ol by forming the C-22(23) double bond in the sterol side chain. Finally, ergosta-5,7,22,24(28)-tetraen-3beta-ol is substrate of the C-24(28) sterol reductase ERG4 to produce ergosterol. Facilitates the association of ERG7 with lipid particles preventing its digestion in the endoplasmic reticulum and the lipid particles. This chain is 3-keto-steroid reductase ERG27, found in Saccharomyces cerevisiae (strain ATCC 204508 / S288c) (Baker's yeast).